A 304-amino-acid chain; its full sequence is UDP-N-acetylenolpyruvoylglucosamine reductase (304 aa).

Residues 33–198 enclose the FAD-binding PCMH-type domain; the sequence is RVGGPVDILL…ITATFCFESG (166 aa). Residue arginine 177 is part of the active site. Serine 227 acts as the Proton donor in catalysis. Glutamate 297 is a catalytic residue.

This sequence belongs to the MurB family. FAD is required as a cofactor.

It localises to the cytoplasm. It catalyses the reaction UDP-N-acetyl-alpha-D-muramate + NADP(+) = UDP-N-acetyl-3-O-(1-carboxyvinyl)-alpha-D-glucosamine + NADPH + H(+). The protein operates within cell wall biogenesis; peptidoglycan biosynthesis. Functionally, cell wall formation. The polypeptide is UDP-N-acetylenolpyruvoylglucosamine reductase (Clostridium botulinum (strain Alaska E43 / Type E3)).